The following is a 363-amino-acid chain: MDVRMNQGHLLLAVTLIVCNSQLLVVANSWWSLAMNPIQRPEMYIIGAQPLCSQLTGLSQGQRKLCQLYQDHMVYIGEGAKTGIKECQYQFRQRRWNCSTVDNTSVFGRVMHIGSRETAFTYAVSAAGVVNAVSRACREGELSTCGCSRAARPRDLPRDWLWGGCGDNVNYGYRFAREFVDAREREKNYPRGSVEHARTLMNLQNNEAGRMAVYNLANVACKCHGVSGSCSLKTCWLQLADFRRVGEFLKEKYDSAAAMRINRRGKLELVNNRFNPPTGEDLVYIDPSPDYCLRNETTGSLGTQGRLCNKTSEGMDGCELMCCGRGYDQFKTYKHERCHCKFHWCCYVKCKRCTSLVDQFVCK.

The signal sequence occupies residues 1–21 (MDVRMNQGHLLLAVTLIVCNS). A disulfide bridge links Cys-87 with Cys-98. 2 N-linked (GlcNAc...) asparagine glycosylation sites follow: Asn-97 and Asn-103. 10 disulfide bridges follow: Cys-137-Cys-145, Cys-147-Cys-165, Cys-221-Cys-235, Cys-223-Cys-230, Cys-292-Cys-323, Cys-308-Cys-318, Cys-322-Cys-362, Cys-338-Cys-353, Cys-340-Cys-350, and Cys-345-Cys-346. Ser-227 carries the O-palmitoleoyl serine; by PORCN lipid modification. 2 N-linked (GlcNAc...) asparagine glycosylation sites follow: Asn-295 and Asn-309.

It belongs to the Wnt family. Post-translationally, palmitoleoylation is required for efficient binding to frizzled receptors. Depalmitoleoylation leads to Wnt signaling pathway inhibition.

The protein localises to the secreted. It is found in the extracellular space. Its subcellular location is the extracellular matrix. Ligand for members of the frizzled family of seven transmembrane receptors. Can activate or inhibit canonical Wnt signaling, depending on receptor context. Required during embryogenesis for extension of the primary anterior-posterior axis. Regulates convergent extension movements and hypaxial myogenesis during gastrulation via activation of non-canonical Wnt signaling. The chain is Protein Wnt-5b (wnt5b) from Danio rerio (Zebrafish).